A 315-amino-acid chain; its full sequence is Acetyl-coenzyme A carboxylase carboxyl transferase subunit alpha (315 aa).

A CoA carboxyltransferase C-terminal domain is found at 36-289 (LSKKRLELME…RKAVAAELKI (254 aa)).

The protein belongs to the AccA family. As to quaternary structure, acetyl-CoA carboxylase is a heterohexamer composed of biotin carboxyl carrier protein (AccB), biotin carboxylase (AccC) and two subunits each of ACCase subunit alpha (AccA) and ACCase subunit beta (AccD).

The protein resides in the cytoplasm. The enzyme catalyses N(6)-carboxybiotinyl-L-lysyl-[protein] + acetyl-CoA = N(6)-biotinyl-L-lysyl-[protein] + malonyl-CoA. It participates in lipid metabolism; malonyl-CoA biosynthesis; malonyl-CoA from acetyl-CoA: step 1/1. Functionally, component of the acetyl coenzyme A carboxylase (ACC) complex. First, biotin carboxylase catalyzes the carboxylation of biotin on its carrier protein (BCCP) and then the CO(2) group is transferred by the carboxyltransferase to acetyl-CoA to form malonyl-CoA. This is Acetyl-coenzyme A carboxylase carboxyl transferase subunit alpha from Francisella tularensis subsp. holarctica (strain FTNF002-00 / FTA).